Reading from the N-terminus, the 114-residue chain is Vacuolar ATPase assembly integral membrane protein VMA21 (114 aa).

Over 1 to 39 (MATRRIISQEKTLLEKDDSIGSSPAADEKSNIAPAVPTS) the chain is Cytoplasmic. Residues 40-60 (VIMKLLAFTLGMIVIPIGSYF) traverse the membrane as a helical segment. Topologically, residues 61 to 73 (ATVDSVFNGNSTY) are lumenal. Residues 74–94 (AGALAAIMANVVLIGYIFVAM) traverse the membrane as a helical segment. Topologically, residues 95–114 (AEDQSDQQEGGGPGDGKKDR) are cytoplasmic. The short motif at 111–114 (KKDR) is the Prevents secretion from ER element.

It belongs to the VMA21 family.

The protein resides in the endoplasmic reticulum membrane. It is found in the endoplasmic reticulum-Golgi intermediate compartment membrane. The protein localises to the cytoplasmic vesicle. It localises to the COPII-coated vesicle membrane. Its function is as follows. Required for the assembly of the V0 complex of the vacuolar ATPase (V-ATPase) in the endoplasmic reticulum. The chain is Vacuolar ATPase assembly integral membrane protein VMA21 from Chaetomium globosum (strain ATCC 6205 / CBS 148.51 / DSM 1962 / NBRC 6347 / NRRL 1970) (Soil fungus).